Consider the following 484-residue polypeptide: Cysteine--tRNA ligase (484 aa).

Position 29 (Cys-29) interacts with Zn(2+). A 'HIGH' region motif is present at residues 31–41 (PTVQSAPHIGH). Zn(2+)-binding residues include Cys-219, His-244, and Glu-248. A 'KMSKS' region motif is present at residues 275 to 279 (KMSKS). Lys-278 contributes to the ATP binding site.

It belongs to the class-I aminoacyl-tRNA synthetase family. As to quaternary structure, monomer. Requires Zn(2+) as cofactor.

The protein resides in the cytoplasm. The catalysed reaction is tRNA(Cys) + L-cysteine + ATP = L-cysteinyl-tRNA(Cys) + AMP + diphosphate. The protein is Cysteine--tRNA ligase of Clavibacter sepedonicus (Clavibacter michiganensis subsp. sepedonicus).